Reading from the N-terminus, the 522-residue chain is Kelch domain-containing protein 4 (522 aa).

Basic residues predominate over residues 1–10; that stretch reads MGKKGKKEKK. Positions 1 to 33 are disordered; sequence MGKKGKKEKKGRGAEKTAAKMEKKVSKRSRKEE. Positions 11-24 are enriched in basic and acidic residues; it reads GRGAEKTAAKMEKK. Kelch repeat units lie at residues 77-129, 133-187, 188-241, 243-289, and 308-361; these read ELIL…VVPQ, QLWV…AWKR, QLIL…VTPQ, GIII…MNPS, and QTLF…RRGR. Disordered regions lie at residues 346–378, 402–432, and 481–522; these read QLKG…GAGT, LAAP…PCPR, and DPET…GAED. 2 positions are modified to phosphoserine: serine 413 and serine 418. The stretch at 443–494 is one Kelch 6 repeat; sequence VLYVYGGMFEAGDRQVTLSDLHCLDLHRMEAWKALVEMDPETQEWLEETDSE.

This Pongo abelii (Sumatran orangutan) protein is Kelch domain-containing protein 4 (KLHDC4).